A 203-amino-acid polypeptide reads, in one-letter code: Akirin-2 (203 aa).

Phosphoserine occurs at positions 18 and 21. Positions 22–27 match the Nuclear localization signal motif; it reads PKRRRC. Serine 57 carries the phosphoserine modification. The SYVS motif signature appears at 200-203; it reads SYVS.

Belongs to the akirin family. Homodimer. Interacts with IPO9; the interaction is direct. Associates (via SYVS motif) with 20S and 26S proteasomes. Interacts with SMARCD1; promoting SWI/SNF complex recruitment. Interacts with NFKBIZ. Interacts with YWHAB. In terms of processing, polyubiquitinated. Polyubiquitination is dependent of UBR5 that extends pre-ubiquitinated AKIRIN2. Widely expressed with the highest expression in peripheral blood leukocytes.

The protein resides in the nucleus. It localises to the cytoplasm. The protein localises to the membrane. Molecular adapter that acts as a bridge between a variety of multiprotein complexes, and which is involved in embryonic development, immunity, myogenesis and brain development. Plays a key role in nuclear protein degradation by promoting import of proteasomes into the nucleus: directly binds to fully assembled 20S proteasomes at one end and to nuclear import receptor IPO9 at the other end, bridging them together and mediating the import of pre-assembled proteasome complexes through the nuclear pore. Involved in innate immunity by regulating the production of interleukin-6 (IL6) downstream of Toll-like receptor (TLR): acts by bridging the NF-kappa-B inhibitor NFKBIZ and the SWI/SNF complex, leading to promote induction of IL6. Also involved in adaptive immunity by promoting B-cell activation. Involved in brain development: required for the survival and proliferation of cerebral cortical progenitor cells. Involved in myogenesis: required for skeletal muscle formation and skeletal development, possibly by regulating expression of muscle differentiation factors. Also plays a role in facilitating interdigital tissue regression during limb development. This chain is Akirin-2, found in Homo sapiens (Human).